The sequence spans 373 residues: Chorismate synthase (373 aa).

NADP(+)-binding residues include Arg48 and Arg54. Residues 125–127 (RSS), 248–249 (NA), Gly288, 303–307 (KPTSS), and Arg329 each bind FMN.

It belongs to the chorismate synthase family. In terms of assembly, homotetramer. Requires FMNH2 as cofactor.

The enzyme catalyses 5-O-(1-carboxyvinyl)-3-phosphoshikimate = chorismate + phosphate. It participates in metabolic intermediate biosynthesis; chorismate biosynthesis; chorismate from D-erythrose 4-phosphate and phosphoenolpyruvate: step 7/7. Its function is as follows. Catalyzes the anti-1,4-elimination of the C-3 phosphate and the C-6 proR hydrogen from 5-enolpyruvylshikimate-3-phosphate (EPSP) to yield chorismate, which is the branch point compound that serves as the starting substrate for the three terminal pathways of aromatic amino acid biosynthesis. This reaction introduces a second double bond into the aromatic ring system. The polypeptide is Chorismate synthase (Colwellia psychrerythraea (strain 34H / ATCC BAA-681) (Vibrio psychroerythus)).